We begin with the raw amino-acid sequence, 466 residues long: Ribulose bisphosphate carboxylase large chain (466 aa).

Lys-5 carries the post-translational modification N6,N6,N6-trimethyllysine. Asn-114 and Thr-164 together coordinate substrate. Catalysis depends on Lys-166, which acts as the Proton acceptor. A substrate-binding site is contributed by Lys-168. Mg(2+)-binding residues include Lys-192, Asp-194, and Glu-195. At Lys-192 the chain carries N6-carboxylysine. Residue His-285 is the Proton acceptor of the active site. Substrate contacts are provided by Arg-286, His-318, and Ser-370.

The protein belongs to the RuBisCO large chain family. Type I subfamily. In terms of assembly, heterohexadecamer of 8 large chains and 8 small chains; disulfide-linked. The disulfide link is formed within the large subunit homodimers. It depends on Mg(2+) as a cofactor. The disulfide bond which can form in the large chain dimeric partners within the hexadecamer appears to be associated with oxidative stress and protein turnover.

The protein resides in the plastid. Its subcellular location is the chloroplast. The catalysed reaction is 2 (2R)-3-phosphoglycerate + 2 H(+) = D-ribulose 1,5-bisphosphate + CO2 + H2O. The enzyme catalyses D-ribulose 1,5-bisphosphate + O2 = 2-phosphoglycolate + (2R)-3-phosphoglycerate + 2 H(+). Functionally, ruBisCO catalyzes two reactions: the carboxylation of D-ribulose 1,5-bisphosphate, the primary event in carbon dioxide fixation, as well as the oxidative fragmentation of the pentose substrate in the photorespiration process. Both reactions occur simultaneously and in competition at the same active site. The polypeptide is Ribulose bisphosphate carboxylase large chain (Drosera capensis (Cape sundew)).